The primary structure comprises 101 residues: Small ribosomal subunit protein uS14 (101 aa).

The interval 49–70 (QSLPRDSSPSRQRNRCNQTGRP) is disordered. Residues 52–68 (PRDSSPSRQRNRCNQTG) are compositionally biased toward polar residues.

The protein belongs to the universal ribosomal protein uS14 family. As to quaternary structure, part of the 30S ribosomal subunit. Contacts proteins S3 and S10.

Functionally, binds 16S rRNA, required for the assembly of 30S particles and may also be responsible for determining the conformation of the 16S rRNA at the A site. This Yersinia pseudotuberculosis serotype O:1b (strain IP 31758) protein is Small ribosomal subunit protein uS14.